A 432-amino-acid polypeptide reads, in one-letter code: Maltoporin (432 aa).

The signal sequence occupies residues 1–22 (MKKVSVIAAAVAATLAAGSAFA).

The protein belongs to the porin LamB (TC 1.B.3) family. As to quaternary structure, homotrimer formed of three 18-stranded antiparallel beta-barrels, containing three independent channels.

Its subcellular location is the cell outer membrane. It catalyses the reaction beta-maltose(in) = beta-maltose(out). Its function is as follows. Involved in the transport of maltose and maltodextrins. The sequence is that of Maltoporin from Vibrio parahaemolyticus serotype O3:K6 (strain RIMD 2210633).